The following is a 218-amino-acid chain: Redox-sensing transcriptional repressor Rex (218 aa).

Residues 25 to 64 (WYLSYVQLLHADGCESVSSTRIARAVGVDASLVAKDLSYV) constitute a DNA-binding region (H-T-H motif). 99-104 (GVGSLG) provides a ligand contact to NAD(+).

Belongs to the transcriptional regulatory Rex family. As to quaternary structure, homodimer.

The protein localises to the cytoplasm. Functionally, modulates transcription in response to changes in cellular NADH/NAD(+) redox state. The polypeptide is Redox-sensing transcriptional repressor Rex (Porphyromonas gingivalis (strain ATCC 33277 / DSM 20709 / CIP 103683 / JCM 12257 / NCTC 11834 / 2561)).